The following is a 103-amino-acid chain: SLC35A4 upstream open reading frame protein (103 aa).

The helical transmembrane segment at A62 to V84 threads the bilayer.

It is found in the mitochondrion inner membrane. In terms of biological role, required to maintain cellular respiration. This chain is SLC35A4 upstream open reading frame protein, found in Homo sapiens (Human).